Consider the following 1195-residue polypeptide: EST/SMG-like protein 2 (1195 aa).

Polar residues-rich tracts occupy residues 1 to 10, 18 to 35, and 55 to 68; these read MPETSVQNPL, TRSMFLSASQQQRPSATP, and VLNPSSKRQNSNSV. Disordered regions lie at residues 1–38, 55–130, 179–268, and 610–643; these read MPETSVQNPLRLSENENTRSMFLSASQQQRPSATPSFP, VLNP…VGIT, SKSE…PASN, and DKKERKKSSNNDSSVTESSTGNSRNDNEDDDEIM. 2 stretches are compositionally biased toward basic and acidic residues: residues 83-109 and 197-208; these read RFSDIEGKNNDHTYPERTTVKESEKNP and INDKDNSARDQD. Low complexity-rich tracts occupy residues 210–252 and 619–629; these read NNSG…NNSD and NNDSSVTESST. Residues 1025 to 1164 form the PINc domain; sequence TYFVFDATSW…LISDDDAMKK (140 aa).

Transiently interacts with PEX14.

It is found in the cytoplasm. Its subcellular location is the nucleus. The protein resides in the peroxisome. Its function is as follows. May be involved in the regulation of gene expression responses of environment-sensing pathways. The polypeptide is EST/SMG-like protein 2 (Saccharomyces cerevisiae (strain ATCC 204508 / S288c) (Baker's yeast)).